The following is a 272-amino-acid chain: 2-succinyl-6-hydroxy-2,4-cyclohexadiene-1-carboxylate synthase (272 aa).

It belongs to the AB hydrolase superfamily. MenH family. In terms of assembly, monomer.

It carries out the reaction 5-enolpyruvoyl-6-hydroxy-2-succinyl-cyclohex-3-ene-1-carboxylate = (1R,6R)-6-hydroxy-2-succinyl-cyclohexa-2,4-diene-1-carboxylate + pyruvate. Its pathway is quinol/quinone metabolism; 1,4-dihydroxy-2-naphthoate biosynthesis; 1,4-dihydroxy-2-naphthoate from chorismate: step 3/7. The protein operates within quinol/quinone metabolism; menaquinone biosynthesis. Its function is as follows. Catalyzes a proton abstraction reaction that results in 2,5-elimination of pyruvate from 2-succinyl-5-enolpyruvyl-6-hydroxy-3-cyclohexene-1-carboxylate (SEPHCHC) and the formation of 2-succinyl-6-hydroxy-2,4-cyclohexadiene-1-carboxylate (SHCHC). The protein is 2-succinyl-6-hydroxy-2,4-cyclohexadiene-1-carboxylate synthase of Yersinia pseudotuberculosis serotype IB (strain PB1/+).